The primary structure comprises 135 residues: Large ribosomal subunit protein eL32 (135 aa).

It belongs to the eukaryotic ribosomal protein eL32 family.

This is Large ribosomal subunit protein eL32 from Methanococcus maripaludis (strain C5 / ATCC BAA-1333).